Reading from the N-terminus, the 524-residue chain is GMP synthase [glutamine-hydrolyzing] (524 aa).

Residues 12–201 (TILVLDFGSQ…AVDICKASQS (190 aa)) enclose the Glutamine amidotransferase type-1 domain. C88 functions as the Nucleophile in the catalytic mechanism. Catalysis depends on residues H175 and E177. The GMPS ATP-PPase domain occupies 202-399 (WNMENFIDTE…LGISHELVWR (198 aa)). 230–236 (SGGVDST) provides a ligand contact to ATP. XMP contacts are provided by R303, D461, K516, and E522.

Homodimer. Requires Mg(2+) as cofactor.

The protein resides in the cytoplasm. Its subcellular location is the cytosol. It catalyses the reaction XMP + L-glutamine + ATP + H2O = GMP + L-glutamate + AMP + diphosphate + 2 H(+). Its pathway is purine metabolism; GMP biosynthesis; GMP from XMP (L-Gln route): step 1/1. Catalyzes the conversion of xanthine monophosphate (XMP) to GMP in the presence of glutamine and ATP through an adenyl-XMP intermediate. This is GMP synthase [glutamine-hydrolyzing] (GUA1) from Kluyveromyces lactis (strain ATCC 8585 / CBS 2359 / DSM 70799 / NBRC 1267 / NRRL Y-1140 / WM37) (Yeast).